We begin with the raw amino-acid sequence, 85 residues long: Progonadoliberin-2 (85 aa).

A signal peptide spans 1–23 (MCVSRLVLLFGLLLCVGAQLSNA). At glutamine 24 the chain carries Pyrrolidone carboxylic acid. Position 33 is a glycine amide (glycine 33).

Belongs to the GnRH family.

It localises to the secreted. Functionally, stimulates the secretion of gonadotropins. In Dicentrarchus labrax (European seabass), this protein is Progonadoliberin-2 (gnrh2).